The chain runs to 400 residues: Protein transport protein HofC homolog (400 aa).

The next 3 membrane-spanning stretches (helical) occupy residues 165–185, 209–229, and 370–390; these read YPIIILAMAIMVVVAMLHFVL, LADFSGEWSWLLVLFGFLLAI, and LLIITGGIIGTLVVAMYLPIF.

Belongs to the GSP F family.

The protein localises to the cell inner membrane. The polypeptide is Protein transport protein HofC homolog (hofC) (Escherichia coli (strain K12)).